Reading from the N-terminus, the 328-residue chain is tRNA dimethylallyltransferase (328 aa).

10-17 (GPTASGKT) contributes to the ATP binding site. Substrate is bound at residue 12–17 (TASGKT).

This sequence belongs to the IPP transferase family. Monomer. Mg(2+) serves as cofactor.

It carries out the reaction adenosine(37) in tRNA + dimethylallyl diphosphate = N(6)-dimethylallyladenosine(37) in tRNA + diphosphate. Functionally, catalyzes the transfer of a dimethylallyl group onto the adenine at position 37 in tRNAs that read codons beginning with uridine, leading to the formation of N6-(dimethylallyl)adenosine (i(6)A). In Bifidobacterium longum (strain NCC 2705), this protein is tRNA dimethylallyltransferase.